Here is a 401-residue protein sequence, read N- to C-terminus: Ornithine aminotransferase (401 aa).

K258 carries the N6-(pyridoxal phosphate)lysine modification.

This sequence belongs to the class-III pyridoxal-phosphate-dependent aminotransferase family. OAT subfamily. Pyridoxal 5'-phosphate is required as a cofactor.

The protein localises to the cytoplasm. The catalysed reaction is a 2-oxocarboxylate + L-ornithine = L-glutamate 5-semialdehyde + an L-alpha-amino acid. Its pathway is amino-acid biosynthesis; L-proline biosynthesis; L-glutamate 5-semialdehyde from L-ornithine: step 1/1. Its function is as follows. Catalyzes the interconversion of ornithine to glutamate semialdehyde. The chain is Ornithine aminotransferase from Bacillus subtilis (strain 168).